We begin with the raw amino-acid sequence, 417 residues long: Serpin H1 (417 aa).

The signal sequence occupies residues 1 to 17 (MRSLLLGTLCLLAVALA). Lys-93 is subject to N6-succinyllysine. 2 N-linked (GlcNAc...) asparagine glycosylation sites follow: Asn-119 and Asn-124. The residue at position 140 (Ser-140) is a Phosphoserine. At Lys-206 the chain carries N6-acetyllysine. N6-succinyllysine is present on Lys-295. At Lys-318 the chain carries N6-acetyllysine. Asn-394 is a glycosylation site (N-linked (GlcNAc...) asparagine). The short motif at 414-417 (RDEL) is the Prevents secretion from ER element.

The protein belongs to the serpin family.

It is found in the endoplasmic reticulum lumen. Its function is as follows. Binds specifically to collagen. Could be involved as a chaperone in the biosynthetic pathway of collagen. This Rattus norvegicus (Rat) protein is Serpin H1 (Serpinh1).